The primary structure comprises 605 residues: SET domain-containing protein SNOG_11806 (605 aa).

Residues 68 to 132 are disordered; it reads TLDLTGMKTP…SRKGTGGLRV (65 aa). Residues 75–89 are compositionally biased toward polar residues; it reads KTPQPSRSPTVTRNV. A compositionally biased stretch (acidic residues) spans 104-115; the sequence is ESADDDDDDLQD. In terms of domain architecture, SET spans 473–579; that stretch reads PPVQIYRTAE…AGSEITVDYG (107 aa).

The protein belongs to the class V-like SAM-binding methyltransferase superfamily.

In Phaeosphaeria nodorum (strain SN15 / ATCC MYA-4574 / FGSC 10173) (Glume blotch fungus), this protein is SET domain-containing protein SNOG_11806.